The primary structure comprises 142 residues: Putative pre-16S rRNA nuclease (142 aa).

Belongs to the YqgF nuclease family.

The protein localises to the cytoplasm. Functionally, could be a nuclease involved in processing of the 5'-end of pre-16S rRNA. In Lawsonia intracellularis (strain PHE/MN1-00), this protein is Putative pre-16S rRNA nuclease.